We begin with the raw amino-acid sequence, 58 residues long: Small ribosomal subunit protein bS21 (58 aa).

Residues 37-58 form a disordered region; it reads FYEKPSVKRKKKSEAARKRKKF. The segment covering 43–58 has biased composition (basic residues); the sequence is VKRKKKSEAARKRKKF.

The protein belongs to the bacterial ribosomal protein bS21 family.

The polypeptide is Small ribosomal subunit protein bS21 (Enterococcus faecalis (strain ATCC 700802 / V583)).